Here is a 135-residue protein sequence, read N- to C-terminus: Nucleoside diphosphate kinase (135 aa).

ATP-binding residues include Lys-9, Phe-57, Arg-85, Thr-91, Arg-102, and Asn-112. The active-site Pros-phosphohistidine intermediate is His-115.

It belongs to the NDK family. Homotetramer. Requires Mg(2+) as cofactor.

The protein resides in the cytoplasm. The catalysed reaction is a 2'-deoxyribonucleoside 5'-diphosphate + ATP = a 2'-deoxyribonucleoside 5'-triphosphate + ADP. The enzyme catalyses a ribonucleoside 5'-diphosphate + ATP = a ribonucleoside 5'-triphosphate + ADP. Its function is as follows. Major role in the synthesis of nucleoside triphosphates other than ATP. The ATP gamma phosphate is transferred to the NDP beta phosphate via a ping-pong mechanism, using a phosphorylated active-site intermediate. The protein is Nucleoside diphosphate kinase of Thermobifida fusca (strain YX).